We begin with the raw amino-acid sequence, 404 residues long: Putative transporter AmpG 2 (404 aa).

12 consecutive transmembrane segments (helical) span residues 11 to 31 (IYNI…YLLT), 49 to 69 (IGLF…GPLL), 84 to 104 (YCLI…TGFN), 109 to 129 (FISF…YDML), 154 to 174 (FRIG…IISW), 177 to 197 (VYRT…FYPL), 224 to 244 (WLII…LAVM), 261 to 281 (LGYK…GGFL), 294 to 311 (VLVY…LYSY), 315 to 337 (ITTL…SPFF), 353 to 373 (IALI…ISGY), and 378 to 398 (LGWG…YILI).

It belongs to the major facilitator superfamily.

It is found in the cell inner membrane. The polypeptide is Putative transporter AmpG 2 (ampG2) (Rickettsia bellii (strain RML369-C)).